The sequence spans 383 residues: L-lactate dehydrogenase (383 aa).

The FMN hydroxy acid dehydrogenase domain maps to 1–380; that stretch reads MIIASTFDYR…TCESLVNTDA (380 aa). Residue Tyr24 participates in substrate binding. Positions 106 and 127 each coordinate FMN. Tyr129 is a binding site for substrate. Thr155 contacts FMN. Arg164 serves as a coordination point for substrate. Lys251 lines the FMN pocket. Residue His275 is the Proton acceptor of the active site. Arg278 contacts substrate. Residue 306–330 participates in FMN binding; sequence DSGVRSGLDVVRMIAQGADAVMIGR.

It belongs to the FMN-dependent alpha-hydroxy acid dehydrogenase family. FMN serves as cofactor.

The protein resides in the cell inner membrane. The enzyme catalyses (S)-lactate + A = pyruvate + AH2. Its function is as follows. Catalyzes the conversion of L-lactate to pyruvate. Is coupled to the respiratory chain. In Bartonella tribocorum (strain CIP 105476 / IBS 506), this protein is L-lactate dehydrogenase.